The sequence spans 196 residues: ATP-dependent Clp protease proteolytic subunit (196 aa).

Residue serine 101 is the Nucleophile of the active site. Histidine 126 is an active-site residue.

This sequence belongs to the peptidase S14 family. In terms of assembly, component of the chloroplastic Clp protease core complex.

It localises to the plastid. It is found in the chloroplast stroma. It carries out the reaction Hydrolysis of proteins to small peptides in the presence of ATP and magnesium. alpha-casein is the usual test substrate. In the absence of ATP, only oligopeptides shorter than five residues are hydrolyzed (such as succinyl-Leu-Tyr-|-NHMec, and Leu-Tyr-Leu-|-Tyr-Trp, in which cleavage of the -Tyr-|-Leu- and -Tyr-|-Trp bonds also occurs).. Its function is as follows. Cleaves peptides in various proteins in a process that requires ATP hydrolysis. Has a chymotrypsin-like activity. Plays a major role in the degradation of misfolded proteins. The chain is ATP-dependent Clp protease proteolytic subunit from Lepidium virginicum (Virginia pepperweed).